The sequence spans 305 residues: UDP-3-O-acyl-N-acetylglucosamine deacetylase (305 aa).

Zn(2+)-binding residues include H78, H237, and D241. The Proton donor role is filled by H264.

The protein belongs to the LpxC family. Zn(2+) is required as a cofactor.

The enzyme catalyses a UDP-3-O-[(3R)-3-hydroxyacyl]-N-acetyl-alpha-D-glucosamine + H2O = a UDP-3-O-[(3R)-3-hydroxyacyl]-alpha-D-glucosamine + acetate. It functions in the pathway glycolipid biosynthesis; lipid IV(A) biosynthesis; lipid IV(A) from (3R)-3-hydroxytetradecanoyl-[acyl-carrier-protein] and UDP-N-acetyl-alpha-D-glucosamine: step 2/6. Its function is as follows. Catalyzes the hydrolysis of UDP-3-O-myristoyl-N-acetylglucosamine to form UDP-3-O-myristoylglucosamine and acetate, the committed step in lipid A biosynthesis. This is UDP-3-O-acyl-N-acetylglucosamine deacetylase from Burkholderia ambifaria (strain ATCC BAA-244 / DSM 16087 / CCUG 44356 / LMG 19182 / AMMD) (Burkholderia cepacia (strain AMMD)).